Here is a 134-residue protein sequence, read N- to C-terminus: ATP synthase epsilon chain (134 aa).

It belongs to the ATPase epsilon chain family. As to quaternary structure, F-type ATPases have 2 components, CF(1) - the catalytic core - and CF(0) - the membrane proton channel. CF(1) has five subunits: alpha(3), beta(3), gamma(1), delta(1), epsilon(1). CF(0) has three main subunits: a, b and c.

It is found in the cell inner membrane. Its function is as follows. Produces ATP from ADP in the presence of a proton gradient across the membrane. The sequence is that of ATP synthase epsilon chain from Solibacter usitatus (strain Ellin6076).